The following is a 525-amino-acid chain: Mitochondrial-processing peptidase subunit alpha (525 aa).

A mitochondrion-targeting transit peptide spans 1 to 33 (MAAMVLAATRLLRGSGSWGRSRPRFGDPAYRRF). Lys-64 is subject to N6-succinyllysine. Lys-299 carries the post-translational modification N6-acetyllysine.

It belongs to the peptidase M16 family. Heterodimer of PMPCA (alpha) and PMPCB (beta) subunits, forming the mitochondrial processing protease (MPP) in which PMPCA is involved in substrate recognition and binding and PMPCB is the catalytic subunit.

It localises to the mitochondrion matrix. Its subcellular location is the mitochondrion inner membrane. Its function is as follows. Substrate recognition and binding subunit of the essential mitochondrial processing protease (MPP), which cleaves the mitochondrial sequence off newly imported precursors proteins. This chain is Mitochondrial-processing peptidase subunit alpha (PMPCA), found in Bos taurus (Bovine).